Reading from the N-terminus, the 258-residue chain is Imidazole glycerol phosphate synthase subunit HisF (258 aa).

Active-site residues include D11 and D130.

It belongs to the HisA/HisF family. Heterodimer of HisH and HisF.

The protein resides in the cytoplasm. The catalysed reaction is 5-[(5-phospho-1-deoxy-D-ribulos-1-ylimino)methylamino]-1-(5-phospho-beta-D-ribosyl)imidazole-4-carboxamide + L-glutamine = D-erythro-1-(imidazol-4-yl)glycerol 3-phosphate + 5-amino-1-(5-phospho-beta-D-ribosyl)imidazole-4-carboxamide + L-glutamate + H(+). The protein operates within amino-acid biosynthesis; L-histidine biosynthesis; L-histidine from 5-phospho-alpha-D-ribose 1-diphosphate: step 5/9. Functionally, IGPS catalyzes the conversion of PRFAR and glutamine to IGP, AICAR and glutamate. The HisF subunit catalyzes the cyclization activity that produces IGP and AICAR from PRFAR using the ammonia provided by the HisH subunit. This Escherichia fergusonii (strain ATCC 35469 / DSM 13698 / CCUG 18766 / IAM 14443 / JCM 21226 / LMG 7866 / NBRC 102419 / NCTC 12128 / CDC 0568-73) protein is Imidazole glycerol phosphate synthase subunit HisF.